The primary structure comprises 156 residues: Crossover junction endodeoxyribonuclease RuvC (156 aa).

Active-site residues include Asp7, Glu67, and Asp140. Asp7, Glu67, and Asp140 together coordinate Mg(2+).

It belongs to the RuvC family. In terms of assembly, homodimer which binds Holliday junction (HJ) DNA. The HJ becomes 2-fold symmetrical on binding to RuvC with unstacked arms; it has a different conformation from HJ DNA in complex with RuvA. In the full resolvosome a probable DNA-RuvA(4)-RuvB(12)-RuvC(2) complex forms which resolves the HJ. Mg(2+) serves as cofactor.

Its subcellular location is the cytoplasm. It carries out the reaction Endonucleolytic cleavage at a junction such as a reciprocal single-stranded crossover between two homologous DNA duplexes (Holliday junction).. In terms of biological role, the RuvA-RuvB-RuvC complex processes Holliday junction (HJ) DNA during genetic recombination and DNA repair. Endonuclease that resolves HJ intermediates. Cleaves cruciform DNA by making single-stranded nicks across the HJ at symmetrical positions within the homologous arms, yielding a 5'-phosphate and a 3'-hydroxyl group; requires a central core of homology in the junction. The consensus cleavage sequence is 5'-(A/T)TT(C/G)-3'. Cleavage occurs on the 3'-side of the TT dinucleotide at the point of strand exchange. HJ branch migration catalyzed by RuvA-RuvB allows RuvC to scan DNA until it finds its consensus sequence, where it cleaves and resolves the cruciform DNA. In Rickettsia felis (strain ATCC VR-1525 / URRWXCal2) (Rickettsia azadi), this protein is Crossover junction endodeoxyribonuclease RuvC.